We begin with the raw amino-acid sequence, 1615 residues long: DNA-directed RNA polymerase I subunit rpa1 (1615 aa).

4 residues coordinate Zn(2+): Cys-65, Cys-68, Cys-75, and His-78. Residues 155–181 (GKSNEEGEEVMESDESDSDKMDTDENK) form a disordered region. Over residues 160 to 171 (EGEEVMESDESD) the composition is skewed to acidic residues. The span at 172–181 (SDKMDTDENK) shows a compositional bias: basic and acidic residues. The Mg(2+) site is built by Asp-593, Asp-595, and Asp-597. The tract at residues 955–967 (PQDYFFHCMAGRE) is bridging helix. The segment covering 1305–1316 (DSLTINDDDAPA) has biased composition (acidic residues). A disordered region spans residues 1305-1411 (DSLTINDDDA…NSRSSNSFSD (107 aa)). Residues 1317 to 1336 (NDDTTNNDENTSQQQPSSQN) are compositionally biased toward low complexity. Positions 1366-1399 (EDGEEEAEEKDSDEGESEAEESDDKSDVDSDSDE) are enriched in acidic residues. The segment covering 1400–1411 (ISNSRSSNSFSD) has biased composition (low complexity).

Belongs to the RNA polymerase beta' chain family. Component of the RNA polymerase I (Pol I) complex consisting of at least 13 subunits.

It is found in the nucleus. It carries out the reaction RNA(n) + a ribonucleoside 5'-triphosphate = RNA(n+1) + diphosphate. In terms of biological role, DNA-dependent RNA polymerase catalyzes the transcription of DNA into RNA using the four ribonucleoside triphosphates as substrates. Largest and catalytic core component of RNA polymerase I which synthesizes ribosomal RNA precursors. Forms the polymerase active center together with the second largest subunit. A single stranded DNA template strand of the promoter is positioned within the central active site cleft of Pol I. A bridging helix emanates from RPA1 and crosses the cleft near the catalytic site and is thought to promote translocation of Pol I by acting as a ratchet that moves the RNA-DNA hybrid through the active site by switching from straight to bent conformations at each step of nucleotide addition. The sequence is that of DNA-directed RNA polymerase I subunit rpa1 (polr1a) from Dictyostelium discoideum (Social amoeba).